Here is a 199-residue protein sequence, read N- to C-terminus: Cytochrome c oxidase subunit 2 (199 aa).

The chain crosses the membrane as a helical span at residues 1 to 13 (AICSLVLYLLTLM). Residues 14–26 (LMEKLSSNSVDAQ) lie on the Mitochondrial matrix side of the membrane. Residues 27 to 54 (EVELVWTILPAIVLILLALPSLQILYMM) traverse the membrane as a helical segment. The Mitochondrial intermembrane segment spans residues 55 to 199 (DEIDEPDLTL…SSLLSTSSSL (145 aa)). 6 residues coordinate Cu cation: histidine 128, cysteine 163, glutamate 165, cysteine 167, histidine 171, and methionine 174. Glutamate 165 is a binding site for Mg(2+).

It belongs to the cytochrome c oxidase subunit 2 family. Component of the cytochrome c oxidase (complex IV, CIV), a multisubunit enzyme composed of 14 subunits. The complex is composed of a catalytic core of 3 subunits MT-CO1, MT-CO2 and MT-CO3, encoded in the mitochondrial DNA, and 11 supernumerary subunits COX4I, COX5A, COX5B, COX6A, COX6B, COX6C, COX7A, COX7B, COX7C, COX8 and NDUFA4, which are encoded in the nuclear genome. The complex exists as a monomer or a dimer and forms supercomplexes (SCs) in the inner mitochondrial membrane with NADH-ubiquinone oxidoreductase (complex I, CI) and ubiquinol-cytochrome c oxidoreductase (cytochrome b-c1 complex, complex III, CIII), resulting in different assemblies (supercomplex SCI(1)III(2)IV(1) and megacomplex MCI(2)III(2)IV(2)). Found in a complex with TMEM177, COA6, COX18, COX20, SCO1 and SCO2. Interacts with TMEM177 in a COX20-dependent manner. Interacts with COX20. Interacts with COX16. Cu cation serves as cofactor.

It is found in the mitochondrion inner membrane. It catalyses the reaction 4 Fe(II)-[cytochrome c] + O2 + 8 H(+)(in) = 4 Fe(III)-[cytochrome c] + 2 H2O + 4 H(+)(out). Functionally, component of the cytochrome c oxidase, the last enzyme in the mitochondrial electron transport chain which drives oxidative phosphorylation. The respiratory chain contains 3 multisubunit complexes succinate dehydrogenase (complex II, CII), ubiquinol-cytochrome c oxidoreductase (cytochrome b-c1 complex, complex III, CIII) and cytochrome c oxidase (complex IV, CIV), that cooperate to transfer electrons derived from NADH and succinate to molecular oxygen, creating an electrochemical gradient over the inner membrane that drives transmembrane transport and the ATP synthase. Cytochrome c oxidase is the component of the respiratory chain that catalyzes the reduction of oxygen to water. Electrons originating from reduced cytochrome c in the intermembrane space (IMS) are transferred via the dinuclear copper A center (CU(A)) of subunit 2 and heme A of subunit 1 to the active site in subunit 1, a binuclear center (BNC) formed by heme A3 and copper B (CU(B)). The BNC reduces molecular oxygen to 2 water molecules using 4 electrons from cytochrome c in the IMS and 4 protons from the mitochondrial matrix. This Apteryx australis (Southern brown kiwi) protein is Cytochrome c oxidase subunit 2 (MT-CO2).